A 62-amino-acid chain; its full sequence is Large ribosomal subunit protein bL32m (62 aa).

This sequence belongs to the bacterial ribosomal protein bL32 family.

The protein localises to the mitochondrion. This is Large ribosomal subunit protein bL32m (RPL32) from Reclinomonas americana.